An 815-amino-acid polypeptide reads, in one-letter code: Serotype-specific mannosyltransferase WbdA (815 aa).

The tract at residues 1-374 (MSRAIIENAG…WANTAHLAID (374 aa)) is alpha-(1-&gt;2)-mannosyltransferase. An alpha-(1-&gt;3)-mannosyltransferase region spans residues 431–804 (KLLVDISVLA…WKQSAELLLK (374 aa)).

This sequence belongs to the glycosyltransferase group 1 family. Glycosyltransferase 4 subfamily.

The protein resides in the cell inner membrane. The protein operates within bacterial outer membrane biogenesis; LPS O-antigen biosynthesis. Its function is as follows. Mannosyltransferase involved in the biosynthesis of the repeat unit of the lipopolysaccharide (LPS) O-antigen region. The protein is Serotype-specific mannosyltransferase WbdA of Escherichia coli.